We begin with the raw amino-acid sequence, 145 residues long: MSLTDYVREVSLADFGKPFKHQASWNRRLRTTGGRFFPKDGHLDFNPKILEEHGETVFRQIVRHELCHYHLYFEGLGFRHKDQAFKELLDQVDGLRYAPKLQSHQANYLYICQDCGQAYDRKRPINLAVFACGRCHGRLIEKNQS.

The region spanning 5–140 (DYVREVSLAD…ACGRCHGRLI (136 aa)) is the SprT-like domain. Position 64 (H64) interacts with Zn(2+). E65 is a catalytic residue. Residue H68 coordinates Zn(2+).

The protein belongs to the SprT family. Zn(2+) serves as cofactor.

It is found in the cytoplasm. The protein is Protein SprT-like of Streptococcus equi subsp. equi (strain 4047).